A 477-amino-acid polypeptide reads, in one-letter code: Bifunctional protein HldE (477 aa).

A ribokinase region spans residues 1 to 318 (MKVTLPEFER…ENAVRGRADT (318 aa)). 195-198 (NLSE) contributes to the ATP binding site. Residue Asp-264 is part of the active site. The interval 344–477 (MTNGVFDILH…IKKIQKDSDK (134 aa)) is cytidylyltransferase.

It in the N-terminal section; belongs to the carbohydrate kinase PfkB family. In the C-terminal section; belongs to the cytidylyltransferase family. As to quaternary structure, homodimer.

It carries out the reaction D-glycero-beta-D-manno-heptose 7-phosphate + ATP = D-glycero-beta-D-manno-heptose 1,7-bisphosphate + ADP + H(+). The enzyme catalyses D-glycero-beta-D-manno-heptose 1-phosphate + ATP + H(+) = ADP-D-glycero-beta-D-manno-heptose + diphosphate. Its pathway is nucleotide-sugar biosynthesis; ADP-L-glycero-beta-D-manno-heptose biosynthesis; ADP-L-glycero-beta-D-manno-heptose from D-glycero-beta-D-manno-heptose 7-phosphate: step 1/4. It participates in nucleotide-sugar biosynthesis; ADP-L-glycero-beta-D-manno-heptose biosynthesis; ADP-L-glycero-beta-D-manno-heptose from D-glycero-beta-D-manno-heptose 7-phosphate: step 3/4. Catalyzes the phosphorylation of D-glycero-D-manno-heptose 7-phosphate at the C-1 position to selectively form D-glycero-beta-D-manno-heptose-1,7-bisphosphate. Functionally, catalyzes the ADP transfer from ATP to D-glycero-beta-D-manno-heptose 1-phosphate, yielding ADP-D-glycero-beta-D-manno-heptose. The sequence is that of Bifunctional protein HldE from Citrobacter koseri (strain ATCC BAA-895 / CDC 4225-83 / SGSC4696).